The primary structure comprises 405 residues: Argininosuccinate synthase (405 aa).

Residues 11-19 (AYSGGLDTS) and Ala38 contribute to the ATP site. Positions 91 and 96 each coordinate L-citrulline. Gly121 provides a ligand contact to ATP. Residues Thr123, Asn127, and Asp128 each coordinate L-aspartate. Asn127 provides a ligand contact to L-citrulline. The L-citrulline site is built by Arg131, Ser182, Ser191, Glu267, and Tyr279.

This sequence belongs to the argininosuccinate synthase family. Type 1 subfamily. Homotetramer.

Its subcellular location is the cytoplasm. The catalysed reaction is L-citrulline + L-aspartate + ATP = 2-(N(omega)-L-arginino)succinate + AMP + diphosphate + H(+). It participates in amino-acid biosynthesis; L-arginine biosynthesis; L-arginine from L-ornithine and carbamoyl phosphate: step 2/3. The polypeptide is Argininosuccinate synthase (Sphingopyxis alaskensis (strain DSM 13593 / LMG 18877 / RB2256) (Sphingomonas alaskensis)).